We begin with the raw amino-acid sequence, 235 residues long: Probable inactive serine protease 37 (235 aa).

The first 19 residues, 1 to 19 (MKFIFYLSVLTGTFLFADS), serve as a signal peptide directing secretion. Positions 20-233 (SVQKEDPAPY…YVSWIENTAK (214 aa)) constitute a Peptidase S1 domain. 3 cysteine pairs are disulfide-bonded: cysteine 40-cysteine 56, cysteine 131-cysteine 198, and cysteine 163-cysteine 177.

Belongs to the peptidase S1 family.

It is found in the cytoplasmic vesicle. The protein localises to the secretory vesicle. It localises to the acrosome. The protein resides in the secreted. Its function is as follows. Plays a role in male fertility. May have a role in sperm migration or binding to zona-intact eggs. Involved in the activation of the proacrosin/acrosin system. The chain is Probable inactive serine protease 37 from Macaca fascicularis (Crab-eating macaque).